Here is a 129-residue protein sequence, read N- to C-terminus: Small ribosomal subunit protein uS11 (129 aa).

Belongs to the universal ribosomal protein uS11 family. As to quaternary structure, part of the 30S ribosomal subunit. Interacts with proteins S7 and S18. Binds to IF-3.

Its function is as follows. Located on the platform of the 30S subunit, it bridges several disparate RNA helices of the 16S rRNA. Forms part of the Shine-Dalgarno cleft in the 70S ribosome. This is Small ribosomal subunit protein uS11 from Phocaeicola vulgatus (strain ATCC 8482 / DSM 1447 / JCM 5826 / CCUG 4940 / NBRC 14291 / NCTC 11154) (Bacteroides vulgatus).